The sequence spans 146 residues: MTSSIYGFITLSVVALISQTTCRSLDLLLDGDFNNGLASFDGSSKWSRLPLEFLAAFDLDPHQAQGQHLAEAPEAPLMEAMKRSRGPSPRRLRSYLRRAAGLRGMKRKMFWQPLGYMPASARAHNNVPEVVNENSQDSGTNVFRYG.

The first 24 residues, 1–24, serve as a signal peptide directing secretion; the sequence is MTSSIYGFITLSVVALISQTTCRS. 2 consecutive propeptides follow at residues 25–80 and 92–146; these read LDLL…LMEA and LRSY…FRYG.

Neuron L5.

The protein resides in the secreted. Functionally, may have important functions in renal physiology and in animal behavior, as does bradykinin. The sequence is that of Bradykinin-like neuropeptide (LUQ-1) from Aplysia californica (California sea hare).